A 556-amino-acid chain; its full sequence is Copine-7 (556 aa).

C2 domains follow at residues 1-128 (MSGD…TRPL) and 135-262 (NAGK…AQWD). Ca(2+) contacts are provided by D168, D174, D230, D232, and D238. The 200-residue stretch at 305–504 (HCTVAIDFTA…PALRDIVQFV (200 aa)) folds into the VWFA domain. Residues 536 to 556 (KDLPPRSLGGQTGEAGPSSAP) are disordered.

It belongs to the copine family. It depends on Ca(2+) as a cofactor.

The protein localises to the cytoplasm. It localises to the nucleus. The protein resides in the cell membrane. Calcium-dependent phospholipid-binding protein that may play a role in calcium-mediated intracellular processes. This Rattus norvegicus (Rat) protein is Copine-7.